Reading from the N-terminus, the 350-residue chain is ATP-dependent (S)-NAD(P)H-hydrate dehydratase (350 aa).

The 308-residue stretch at 35 to 342 (LMQSVKRIIP…PEVGRAYEEL (308 aa)) folds into the YjeF C-terminal domain. (6S)-NADPHX-binding positions include G139 and 192-198 (NVAEFGR). Residues 230–234 (KGPVD) and 249–258 (GGLKRCGGQG) contribute to the ATP site. (6S)-NADPHX is bound at residue D259.

It belongs to the NnrD/CARKD family. Requires Mg(2+) as cofactor.

It is found in the cytoplasm. The enzyme catalyses (6S)-NADHX + ATP = ADP + phosphate + NADH + H(+). It carries out the reaction (6S)-NADPHX + ATP = ADP + phosphate + NADPH + H(+). Catalyzes the dehydration of the S-form of NAD(P)HX at the expense of ATP, which is converted to ADP. Together with NAD(P)HX epimerase, which catalyzes the epimerization of the S- and R-forms, the enzyme allows the repair of both epimers of NAD(P)HX, a damaged form of NAD(P)H that is a result of enzymatic or heat-dependent hydration. The chain is ATP-dependent (S)-NAD(P)H-hydrate dehydratase from Mycosarcoma maydis (Corn smut fungus).